Here is a 278-residue protein sequence, read N- to C-terminus: Large ribosomal subunit protein uL2 (278 aa).

A disordered region spans residues 211–278 (KRWLGKRPQS…LIIRRRKGSK (68 aa)). The span at 258–270 (KTRDTKKASEKLI) shows a compositional bias: basic and acidic residues.

It belongs to the universal ribosomal protein uL2 family. Part of the 50S ribosomal subunit. Forms a bridge to the 30S subunit in the 70S ribosome.

Functionally, one of the primary rRNA binding proteins. Required for association of the 30S and 50S subunits to form the 70S ribosome, for tRNA binding and peptide bond formation. It has been suggested to have peptidyltransferase activity; this is somewhat controversial. Makes several contacts with the 16S rRNA in the 70S ribosome. The chain is Large ribosomal subunit protein uL2 from Lactobacillus helveticus (strain DPC 4571).